The primary structure comprises 285 residues: Pantothenate synthetase (285 aa).

30 to 37 (MGYLHAGH) provides a ligand contact to ATP. The active-site Proton donor is the H37. Residue Q61 coordinates (R)-pantoate. Residue Q61 participates in beta-alanine binding. 147 to 150 (GQKD) is an ATP binding site. Residue Q153 coordinates (R)-pantoate. Residues V176 and 184–187 (LSSR) contribute to the ATP site.

The protein belongs to the pantothenate synthetase family. In terms of assembly, homodimer.

It localises to the cytoplasm. The enzyme catalyses (R)-pantoate + beta-alanine + ATP = (R)-pantothenate + AMP + diphosphate + H(+). The protein operates within cofactor biosynthesis; (R)-pantothenate biosynthesis; (R)-pantothenate from (R)-pantoate and beta-alanine: step 1/1. Its function is as follows. Catalyzes the condensation of pantoate with beta-alanine in an ATP-dependent reaction via a pantoyl-adenylate intermediate. The chain is Pantothenate synthetase from Solidesulfovibrio magneticus (strain ATCC 700980 / DSM 13731 / RS-1) (Desulfovibrio magneticus).